Consider the following 328-residue polypeptide: Diacetylchitobiose uptake system permease protein DasB (328 aa).

The segment at Met1–Arg27 is disordered. The next 6 membrane-spanning stretches (helical) occupy residues Ala36 to Trp56, Ile104 to Leu124, Phe134 to Val154, Phe188 to Ile208, Phe247 to Tyr267, and Met297 to Leu317. Positions Thr100–Tyr316 constitute an ABC transmembrane type-1 domain.

Belongs to the binding-protein-dependent transport system permease family. As to quaternary structure, the complex is composed of two ATP-binding proteins (MsiK), two transmembrane proteins (DasB and DasC) and a solute-binding protein (DasA).

It localises to the cell membrane. In terms of biological role, part of the ABC transporter complex DasABC-MsiK involved in N,N'-diacetylchitobiose ((GlcNAc)2) uptake. Responsible for the translocation of the substrate across the membrane. In Streptomyces coelicolor (strain ATCC BAA-471 / A3(2) / M145), this protein is Diacetylchitobiose uptake system permease protein DasB.